Consider the following 438-residue polypeptide: UPF0229 protein NGR_c12350 (438 aa).

The segment covering methionine 1 to leucine 16 has biased composition (basic and acidic residues). Disordered regions lie at residues methionine 1–glutamine 20 and phenylalanine 83–glutamine 107. Over residues serine 94 to threonine 105 the composition is skewed to gly residues.

This sequence belongs to the UPF0229 family.

This chain is UPF0229 protein NGR_c12350, found in Sinorhizobium fredii (strain NBRC 101917 / NGR234).